The primary structure comprises 59 residues: Large ribosomal subunit protein uL30 (59 aa).

This sequence belongs to the universal ribosomal protein uL30 family. As to quaternary structure, part of the 50S ribosomal subunit.

This is Large ribosomal subunit protein uL30 from Proteus mirabilis (strain HI4320).